Reading from the N-terminus, the 347-residue chain is MNPLIFIMLILTIILGTSIILTSTHWFMIWLGFEMNMMAMIPVLMKKYSPRAAEAATKYFLTQATASMILMLALIINLMYSGQWTIMNMTNNMASLLITIALTMKLGLAPFHFWVPEVTQGVSLQAGLILLTWQKIAPLAVMYQIFASINPNLLLTMALLSIMIGGWGGLNQTQLRKIMAYSSIAHMGWMTAIMIYNPNLMLLNLLLYILMTTSMFMMFMYNSTTTTLSLSLTWNKTPLMTVLMMTTLLSLGGLPPLTGFMPKWMIIHELTKNNSVILPTSMAILALINLFFYMRLTYSTSLTMFPTINNMKMKWQFQNTHHTTLLAPLITLSTLILPLTPMFILMT.

The next 11 membrane-spanning stretches (helical) occupy residues 1–21 (MNPLIFIMLILTIILGTSIIL), 25–45 (HWFMIWLGFEMNMMAMIPVLM), 59–79 (YFLTQATASMILMLALIINLM), 96–116 (LLITIALTMKLGLAPFHFWVP), 122–142 (VSLQAGLILLTWQKIAPLAVM), 145–165 (IFASINPNLLLTMALLSIMIG), 178–198 (IMAYSSIAHMGWMTAIMIYNP), 200–220 (LMLLNLLLYILMTTSMFMMFM), 242–262 (VLMMTTLLSLGGLPPLTGFMP), 274–294 (NSVILPTSMAILALINLFFYM), and 325–345 (LLAPLITLSTLILPLTPMFIL).

This sequence belongs to the complex I subunit 2 family. In terms of assembly, core subunit of respiratory chain NADH dehydrogenase (Complex I) which is composed of 45 different subunits. Interacts with TMEM242.

The protein resides in the mitochondrion inner membrane. The enzyme catalyses a ubiquinone + NADH + 5 H(+)(in) = a ubiquinol + NAD(+) + 4 H(+)(out). Core subunit of the mitochondrial membrane respiratory chain NADH dehydrogenase (Complex I) which catalyzes electron transfer from NADH through the respiratory chain, using ubiquinone as an electron acceptor. Essential for the catalytic activity and assembly of complex I. In Myosorex kihaulei (Kihaule's mouse shrew), this protein is NADH-ubiquinone oxidoreductase chain 2.